The following is an 867-amino-acid chain: 2-methylcitrate dehydratase (2-methyl-trans-aconitate forming) (867 aa).

3 residues coordinate [4Fe-4S] cluster: Cys-410, Cys-476, and Cys-479.

It belongs to the aconitase/IPM isomerase family. The cofactor is [4Fe-4S] cluster.

The catalysed reaction is (2S,3S)-2-methylcitrate = 2-methyl-trans-aconitate + H2O. It carries out the reaction citrate = D-threo-isocitrate. It participates in organic acid metabolism; propanoate degradation. Inhibited by ferricyanide and EDTA. Its function is as follows. Involved in the catabolism of short chain fatty acids (SCFA) via the 2-methylcitrate cycle II (propionate degradation route). In vivo under anaerobic conditions, AcnD catalyzes the stereospecific dehydration of (2S,3S)-methylcitrate (2-MC) to yield the trans isomer of 2-methyl-aconitate (2-MCA). AcnD can also accept citrate and cis-aconitate, but with a lower efficiency. 2-methylisocitrate and isocitrate are not substrates. This is 2-methylcitrate dehydratase (2-methyl-trans-aconitate forming) (acnD) from Shewanella oneidensis (strain ATCC 700550 / JCM 31522 / CIP 106686 / LMG 19005 / NCIMB 14063 / MR-1).